We begin with the raw amino-acid sequence, 152 residues long: 17.1 kDa class II heat shock protein (152 aa).

The sHSP domain occupies D36–A152.

This sequence belongs to the small heat shock protein (HSP20) family.

The protein localises to the cytoplasm. The polypeptide is 17.1 kDa class II heat shock protein (HSP17.7) (Pisum sativum (Garden pea)).